A 278-amino-acid chain; its full sequence is 4-diphosphocytidyl-2-C-methyl-D-erythritol kinase (278 aa).

Residue K9 is part of the active site. 89-99 provides a ligand contact to ATP; it reads PVASGIGGGSA. Residue D128 is part of the active site.

It belongs to the GHMP kinase family. IspE subfamily.

The enzyme catalyses 4-CDP-2-C-methyl-D-erythritol + ATP = 4-CDP-2-C-methyl-D-erythritol 2-phosphate + ADP + H(+). The protein operates within isoprenoid biosynthesis; isopentenyl diphosphate biosynthesis via DXP pathway; isopentenyl diphosphate from 1-deoxy-D-xylulose 5-phosphate: step 3/6. In terms of biological role, catalyzes the phosphorylation of the position 2 hydroxy group of 4-diphosphocytidyl-2C-methyl-D-erythritol. This chain is 4-diphosphocytidyl-2-C-methyl-D-erythritol kinase, found in Cereibacter sphaeroides (strain KD131 / KCTC 12085) (Rhodobacter sphaeroides).